We begin with the raw amino-acid sequence, 224 residues long: Histone H1.03 (224 aa).

Composition is skewed to low complexity over residues 1–22 (MAET…AKAA) and 30–42 (AAGG…PAGP). 2 disordered regions span residues 1 to 43 (MAET…AGPS) and 99 to 224 (QTKG…PKKK). Residues 40–113 (AGPSVTELIT…GASGSFRLSK (74 aa)) enclose the H15 domain. Basic residues-rich tracts occupy residues 122–137 (APKK…KPAA), 145–162 (KKPK…KAKK), 170–188 (KAAK…KKAV), and 197–224 (KAVK…PKKK).

This sequence belongs to the histone H1/H5 family.

The protein localises to the nucleus. It localises to the chromosome. Histones H1 are necessary for the condensation of nucleosome chains into higher-order structures. In Gallus gallus (Chicken), this protein is Histone H1.03.